Consider the following 126-residue polypeptide: Ribonuclease P protein component (126 aa).

Belongs to the RnpA family. As to quaternary structure, consists of a catalytic RNA component (M1 or rnpB) and a protein subunit.

It carries out the reaction Endonucleolytic cleavage of RNA, removing 5'-extranucleotides from tRNA precursor.. In terms of biological role, RNaseP catalyzes the removal of the 5'-leader sequence from pre-tRNA to produce the mature 5'-terminus. It can also cleave other RNA substrates such as 4.5S RNA. The protein component plays an auxiliary but essential role in vivo by binding to the 5'-leader sequence and broadening the substrate specificity of the ribozyme. The chain is Ribonuclease P protein component from Synechococcus sp. (strain JA-3-3Ab) (Cyanobacteria bacterium Yellowstone A-Prime).